A 388-amino-acid polypeptide reads, in one-letter code: Processive diacylglycerol beta-glucosyltransferase (388 aa).

It belongs to the glycosyltransferase 28 family. UgtP subfamily.

It localises to the cell membrane. The enzyme catalyses a 1,2-diacyl-3-O-(beta-D-glucopyranosyl)-sn-glycerol + UDP-alpha-D-glucose = a 1,2-diacyl-3-O-(beta-D-Glc-(1-&gt;6)-beta-D-Glc)-sn-glycerol + UDP + H(+). It carries out the reaction a 1,2-diacyl-3-O-(beta-D-Glc-(1-&gt;6)-beta-D-Glc)-sn-glycerol + UDP-alpha-D-glucose = a 1,2-diacyl-3-O-(beta-D-Glc-(1-&gt;6)-beta-D-Glc-(1-&gt;6)-beta-D-Glc)-sn-glycerol + UDP + H(+). The catalysed reaction is a 1,2-diacyl-sn-glycerol + UDP-alpha-D-glucose = a 1,2-diacyl-3-O-(beta-D-glucopyranosyl)-sn-glycerol + UDP + H(+). It functions in the pathway glycolipid metabolism; diglucosyl-diacylglycerol biosynthesis. Functionally, processive glucosyltransferase involved in the biosynthesis of both the bilayer- and non-bilayer-forming membrane glucolipids. Is able to successively transfer up to three glucosyl residues to diacylglycerol (DAG), thereby catalyzing the formation of beta-monoglucosyl-DAG (3-O-(beta-D-glucopyranosyl)-1,2-diacyl-sn-glycerol), beta-diglucosyl-DAG (3-O-(beta-D-glucopyranosyl-beta-(1-&gt;6)-D-glucopyranosyl)-1,2-diacyl-sn-glycerol) and beta-triglucosyl-DAG (3-O-(beta-D-glucopyranosyl-beta-(1-&gt;6)-D-glucopyranosyl-beta-(1-&gt;6)-D-glucopyranosyl)-1,2-diacyl-sn-glycerol). Beta-diglucosyl-DAG is the predominant glycolipid found in Bacillales and is also used as a membrane anchor for lipoteichoic acid (LTA). The protein is Processive diacylglycerol beta-glucosyltransferase of Bacillus thuringiensis (strain Al Hakam).